Consider the following 664-residue polypeptide: Protein IQ-DOMAIN 28 (664 aa).

Residues 1-85 (MGKTPGKWIK…DESKDNLESR (85 aa)) form a disordered region. Residues 51–64 (VDPPVVSSQPVPAS) are compositionally biased toward low complexity. Basic and acidic residues predominate over residues 76 to 85 (DESKDNLESR). 3 IQ domains span residues 93 to 121 (LEQAAIKVQATFRAHQARRAFRTLKGIIR), 122 to 140 (LQAVIRGHLVRRQAIATYS), and 144 to 170 (GIVKFQALVRGQKARSSDIAIQFQKKH). The interval 106-116 (AHQARRAFRTL) is calmodulin-binding. Disordered regions lie at residues 244–488 (EIPK…KEKD), 502–573 (DEKS…SGRK), and 637–664 (AKGSMNGDKSFTSSKDITHKSTRTDWKR). The Nuclear localization signal 1 signature appears at 251 to 258 (KKRNYQAV). Residues 305 to 315 (DPLRNESDKAN) show a composition bias toward basic and acidic residues. Residues 339–353 (SPSLKRSSLSNGSKK) are compositionally biased toward low complexity. A Nuclear localization signal 2 motif is present at residues 351–358 (SKKATLRS). Basic and acidic residues-rich tracts occupy residues 358 to 367 (SAEKKKKDIP), 427 to 447 (TEKEKDTADPVQIEPERKVLE), and 502 to 532 (DEKSPVLDRTEEDELKTAETSDKAEALKCAD). Polar residues predominate over residues 536–547 (SSENGNVGSDNT). Positions 652–664 (DITHKSTRTDWKR) are enriched in basic and acidic residues.

The protein belongs to the IQD family. As to quaternary structure, binds to multiple calmodulin (CaM) in the presence of Ca(2+) and CaM-like proteins.

It is found in the nucleus. The protein resides in the cytoplasm. The protein localises to the cytoskeleton. Its function is as follows. May be involved in cooperative interactions with calmodulins or calmodulin-like proteins. Recruits calmodulin proteins to microtubules, thus being a potential scaffold in cellular signaling and trafficking. May associate with nucleic acids and regulate gene expression at the transcriptional or post-transcriptional level. The chain is Protein IQ-DOMAIN 28 from Arabidopsis thaliana (Mouse-ear cress).